Reading from the N-terminus, the 195-residue chain is uncharacterized protein (195 aa).

The region spanning 24–141 is the HD domain; the sequence is NTDENLKLIF…VFLADKISWD (118 aa).

This is an uncharacterized protein from Lactococcus lactis subsp. cremoris (Streptococcus cremoris).